Reading from the N-terminus, the 303-residue chain is MGGFGAHIKSNRTEITIQHKGKITDIPIKDLSHFLLIGGHTIQTSTITSLVKEGVFISFCESDGEPVGYISPYDYSLFKEIQNLQKTAAPYSYALACANESIKSRILAIEKYAEEIGPEILFSGELDILTGYAKELENMVLIEELRRIEQLVRDMYYEILGRLISPTYLFKRRTSRPYLDPVNAIFSFGYGMLSSACTRAVIGGHLDPGHGYLNRGNQALVQDLMNCWKPKMIDNHAIGFLRSGRLHQNGYERTKDRCILHDEVIEELIHLFSKSIQEELINTQIDVLIQSLRGEAQFSIIKP.

Residue Glu-149 coordinates Mn(2+).

This sequence belongs to the CRISPR-associated endonuclease Cas1 family. In terms of assembly, homodimer, forms a heterotetramer with a Cas2 homodimer. Mg(2+) is required as a cofactor. It depends on Mn(2+) as a cofactor.

CRISPR (clustered regularly interspaced short palindromic repeat), is an adaptive immune system that provides protection against mobile genetic elements (viruses, transposable elements and conjugative plasmids). CRISPR clusters contain sequences complementary to antecedent mobile elements and target invading nucleic acids. CRISPR clusters are transcribed and processed into CRISPR RNA (crRNA). Acts as a dsDNA endonuclease. Involved in the integration of spacer DNA into the CRISPR cassette. This chain is Putative CRISPR-associated endonuclease Cas1 2, found in Methanospirillum hungatei JF-1 (strain ATCC 27890 / DSM 864 / NBRC 100397 / JF-1).